The following is a 314-amino-acid chain: Hydroxyacyl-coenzyme A dehydrogenase, mitochondrial (314 aa).

Residues 1 to 12 (MAFATRQLVRSL) constitute a mitochondrion transit peptide. NAD(+)-binding positions include 34–39 (GGGLMG) and Asp-57. 2 residues coordinate CoA: Ser-73 and Lys-80. At Lys-80 the chain carries N6-succinyllysine. Residues Lys-81 and Lys-87 each carry the N6-acetyllysine; alternate modification. Lys-81 and Lys-87 each carry N6-succinyllysine; alternate. Glu-122 is an NAD(+) binding site. The residue at position 125 (Lys-125) is an N6-acetyllysine. Lys-127 provides a ligand contact to NAD(+). Lys-127 is subject to N6-(2-hydroxyisobutyryl)lysine. N6-acetyllysine; alternate is present on Lys-136. An N6-succinyllysine; alternate modification is found at Lys-136. Ser-149 and Asn-173 together coordinate NAD(+). Ser-149 serves as a coordination point for CoA. An N6-acetyllysine modification is found at Lys-179. N6-acetyllysine; alternate occurs at positions 185, 192, and 202. N6-succinyllysine; alternate occurs at positions 185, 192, and 202. At Lys-206 the chain carries N6-succinyllysine. 2 positions are modified to N6-acetyllysine; alternate: Lys-212 and Lys-241. Lys-212 and Lys-241 each carry N6-succinyllysine; alternate. Residue Lys-305 participates in NAD(+) binding. Lys-312 is subject to N6-acetyllysine; alternate. An N6-succinyllysine; alternate modification is found at Lys-312.

This sequence belongs to the 3-hydroxyacyl-CoA dehydrogenase family. As to quaternary structure, homodimer. Interacts with GLUD1; this interaction inhibits the activation of glutamate dehydrogenase 1 (GLUD1). Post-translationally, succinylation at Lys-81, adjacent to a coenzyme A binding site. Desuccinylated by SIRT5.

The protein localises to the mitochondrion matrix. It carries out the reaction a (3S)-3-hydroxyacyl-CoA + NAD(+) = a 3-oxoacyl-CoA + NADH + H(+). It catalyses the reaction (3S)-3-hydroxybutanoyl-CoA + NAD(+) = acetoacetyl-CoA + NADH + H(+). The enzyme catalyses (3S)-hydroxydecanoyl-CoA + NAD(+) = 3-oxodecanoyl-CoA + NADH + H(+). The catalysed reaction is (3S)-hydroxyhexadecanoyl-CoA + NAD(+) = 3-oxohexadecanoyl-CoA + NADH + H(+). Its pathway is lipid metabolism; fatty acid beta-oxidation. In terms of biological role, mitochondrial fatty acid beta-oxidation enzyme that catalyzes the third step of the beta-oxidation cycle for medium and short-chain 3-hydroxy fatty acyl-CoAs (C4 to C10). Plays a role in the control of insulin secretion by inhibiting the activation of glutamate dehydrogenase 1 (GLUD1), an enzyme that has an important role in regulating amino acid-induced insulin secretion. Plays a role in the maintenance of normal spermatogenesis through the reduction of fatty acid accumulation in the testes. The polypeptide is Hydroxyacyl-coenzyme A dehydrogenase, mitochondrial (HADH) (Sus scrofa (Pig)).